A 279-amino-acid polypeptide reads, in one-letter code: MEKIKIVTDSTCDLPEYIISKFDIEVLPLMVNVKGKSYFDIVDINFKQLSKIMDEENIFPTTSQVTPKRFNDCFAKYLKEGYKIICINMSSKMSGTYQSACIAKDMLESEDVVVIDSLNVTSGLGVLVLKACRLREEGKSFEEIKNEIIETIPHVKSALAFERLDNLIKGGRLSKTAGTIGNLLGIKLILEVKDGEMAIKDKVRGNKKAARVVLDCIKDESMNKEETTLLLNAENDDILPILRQKLIEQENKFIECEVGCVVGAHSGTKACGVFFIEKY.

The 274-residue stretch at 4 to 277 folds into the DegV domain; it reads IKIVTDSTCD…TKACGVFFIE (274 aa). Thr62 and Ser94 together coordinate hexadecanoate.

In terms of biological role, may bind long-chain fatty acids, such as palmitate, and may play a role in lipid transport or fatty acid metabolism. This chain is DegV domain-containing protein CA_C0701, found in Clostridium acetobutylicum (strain ATCC 824 / DSM 792 / JCM 1419 / IAM 19013 / LMG 5710 / NBRC 13948 / NRRL B-527 / VKM B-1787 / 2291 / W).